Reading from the N-terminus, the 125-residue chain is Small ribosomal subunit protein eS8 (125 aa).

Belongs to the eukaryotic ribosomal protein eS8 family. As to quaternary structure, part of the 30S ribosomal subunit.

This chain is Small ribosomal subunit protein eS8, found in Methanosarcina acetivorans (strain ATCC 35395 / DSM 2834 / JCM 12185 / C2A).